The sequence spans 832 residues: Spindle pole body component alp6 (832 aa).

The segment at 1-186 (MSEIHVKTAL…STETSSVQHT (186 aa)) is interaction with mzt1. Phosphothreonine is present on Thr286.

This sequence belongs to the TUBGCP family. As to quaternary structure, part of the gamma-tubulin complex. Interacts directly with mzt1. Interacts with mto1. Interacts with mto2.

The protein resides in the cytoplasm. It localises to the cytoskeleton. It is found in the microtubule organizing center. Its subcellular location is the spindle pole body. Component of the gamma tubule complex that is required for the regulation of both interphase microtubules and mitotic bipolar spindles. In Schizosaccharomyces pombe (strain 972 / ATCC 24843) (Fission yeast), this protein is Spindle pole body component alp6 (alp6).